A 497-amino-acid chain; its full sequence is Trichoplein keratin filament-binding protein (497 aa).

Coiled-coil stretches lie at residues 67 to 140, 166 to 271, and 327 to 479; these read HCEK…LLYE, ATQK…ELGR, and MKQV…AKTM. Residues 72–457 form an interaction with keratin proteins region; that stretch reads KEEKRKILEL…WEAARQEEEE (386 aa). The segment at 167 to 188 is disordered; the sequence is TQKEEKKQQEATEKQENKRLEN. A compositionally biased stretch (basic and acidic residues) spans 168–188; sequence QKEEKKQQEATEKQENKRLEN. The trichohyalin/plectin homology domain stretch occupies residues 258 to 424; it reads RQMAALRRKT…KQLAQRAKEE (167 aa). A disordered region spans residues 441–497; that stretch reads AERQGQEWEAARQEEEEEEEARQAEEHSNALLQQEAKTMAEKGYQPKLHGHLRIAWD. A compositionally biased stretch (basic and acidic residues) spans 444-453; the sequence is QGQEWEAARQ. Over residues 488–497 the composition is skewed to basic residues; the sequence is LHGHLRIAWD.

It belongs to the TCHP family. Interacts specifically with keratin proteins including, KRT5, KRT6A, KRT8, KRT14, KRT16 and KRT18. Interacts with KCTD17. Post-translationally, ubiquitinated. Ubiquitination by the BCR(KCTD17) E3 ubiquitin ligase complex results in proteasomal degradation, and induces ciliogenesis. In terms of tissue distribution, expressed in all tissues examined, including brain, liver, small intestine, large intestine, lung and heart. Found concentrated in tubular structures within hepatocytes, and in the apical cortical region and desmosomes of the apical junctional domain in enterocytes of the small intestine. In the hair follicle, localized at the outer root sheath. Also expressed in blood vessels (at protein level).

It localises to the cytoplasm. Its subcellular location is the cytoskeleton. The protein resides in the cell membrane. The protein localises to the mitochondrion. It is found in the microtubule organizing center. It localises to the centrosome. Functionally, tumor suppressor which has the ability to inhibit cell growth and be pro-apoptotic during cell stress. May act as a 'capping' or 'branching' protein for keratin filaments in the cell periphery. May regulate K8/K18 filament and desmosome organization mainly at the apical or peripheral regions of simple epithelial cells. Is a negative regulator of ciliogenesis. This is Trichoplein keratin filament-binding protein from Mus musculus (Mouse).